The following is a 1226-amino-acid chain: 3-hydroxy-3-methylglutaryl-coenzyme A reductase (1226 aa).

5 consecutive transmembrane segments (helical) span residues 17 to 37 (IETIVSVFVLATLAYFHILSG), 224 to 244 (ILVVLTGYILMHVTFMRLFLA), 252 to 272 (FWLSAGIFSSATISFLFTLPM), 337 to 357 (VGNMILRDYALEIAVLFVGVN), and 373 to 393 (LLAMDRLMTFTLYTAVLTIMV). Positions 223-391 (DILVVLTGYI…FTLYTAVLTI (169 aa)) constitute an SSD domain. The tract at residues 428-449 (LSRKSSKQSVTEPETTKNLRQR) is disordered. The segment covering 434-445 (KQSVTEPETTKN) has biased composition (polar residues). Residues 481–501 (LLLIASFLTLHILNFCTTLTS) traverse the membrane as a helical segment. 2 disordered regions span residues 683–702 (APAPAPAPEPEPPVNRPPPL) and 722–742 (LPIRSPPPVEPITPESREVEP). Residues 685–702 (APAPAPEPEPPVNRPPPL) are compositionally biased toward pro residues. Glutamate 869 functions as the Charge relay system in the catalytic mechanism. Residue 875–881 (STSRGCK) participates in CoA binding. Residues 936-938 (SRF) and 963-971 (DAMGMNMIS) contribute to the NADP(+) site. Catalysis depends on lysine 1001, which acts as the Charge relay system. 1030-1032 (VLK) is a CoA binding site. Aspartate 1077 acts as the Charge relay system in catalysis. Residues 1150–1170 (IIASAVMAGELSLISALAAGH) traverse the membrane as a helical segment. Residue 1174 to 1175 (AH) coordinates CoA. The active-site Proton donor is the histidine 1175. 1179–1180 (NR) lines the NADP(+) pocket. Residues 1182–1226 (QLNTPMPSRPHTPGPEDVSHVQQLPTPSASDDKGVTAQGYVVEAK) form a disordered region. Over residues 1201–1210 (HVQQLPTPSA) the composition is skewed to polar residues.

This sequence belongs to the HMG-CoA reductase family.

It localises to the endoplasmic reticulum membrane. It catalyses the reaction (R)-mevalonate + 2 NADP(+) + CoA = (3S)-3-hydroxy-3-methylglutaryl-CoA + 2 NADPH + 2 H(+). It participates in metabolic intermediate biosynthesis; (R)-mevalonate biosynthesis; (R)-mevalonate from acetyl-CoA: step 3/3. In terms of biological role, HMG-CoA reductase; part of the first module of ergosterol biosynthesis pathway that includes the early steps of the pathway, conserved across all eukaryotes, and which results in the formation of mevalonate from acetyl-coenzyme A (acetyl-CoA). This module also plays a key role in the biosynthesis of triterpenes such as ganoderic acids (GA), a group of highly oxygenated lanostane-type triterpenoids which are well recognized as a main group of unique bioactive compounds in the medicinal mushroom Ganoderma lucidum. In this module, the acetyl-CoA acetyltransferase catalyzes the formation of acetoacetyl-CoA. The hydroxymethylglutaryl-CoA synthase HMGS then condenses acetyl-CoA with acetoacetyl-CoA to form HMG-CoA. The rate-limiting step of the early module is the reduction to mevalonate by the 3-hydroxy-3-methylglutaryl-coenzyme A (HMG-CoA) reductase. In Ganoderma lucidum (Ling zhi medicinal fungus), this protein is 3-hydroxy-3-methylglutaryl-coenzyme A reductase.